Here is a 1398-residue protein sequence, read N- to C-terminus: DNA-directed RNA polymerase subunit beta' (1398 aa).

Zn(2+) contacts are provided by Cys-71, Cys-73, Cys-86, and Cys-89. Asp-462, Asp-464, and Asp-466 together coordinate Mg(2+). Positions 810, 884, 891, and 894 each coordinate Zn(2+).

It belongs to the RNA polymerase beta' chain family. In terms of assembly, the RNAP catalytic core consists of 2 alpha, 1 beta, 1 beta' and 1 omega subunit. When a sigma factor is associated with the core the holoenzyme is formed, which can initiate transcription. The cofactor is Mg(2+). It depends on Zn(2+) as a cofactor.

It catalyses the reaction RNA(n) + a ribonucleoside 5'-triphosphate = RNA(n+1) + diphosphate. Its function is as follows. DNA-dependent RNA polymerase catalyzes the transcription of DNA into RNA using the four ribonucleoside triphosphates as substrates. This is DNA-directed RNA polymerase subunit beta' from Mesorhizobium japonicum (strain LMG 29417 / CECT 9101 / MAFF 303099) (Mesorhizobium loti (strain MAFF 303099)).